The chain runs to 363 residues: Putative transcriptional activator MSA2 (363 aa).

The segment at 1–20 (MVYTTPQQQQRFSSTPQSSH) is disordered. Ser157 and Ser292 each carry phosphoserine.

In terms of assembly, interacts with transcription complexes SCB-binding factor (SBF) and MCB-binding factor (MBF). Interacts with SWI4.

In Saccharomyces cerevisiae (strain ATCC 204508 / S288c) (Baker's yeast), this protein is Putative transcriptional activator MSA2 (MSA2).